A 98-amino-acid polypeptide reads, in one-letter code: Tax1-binding protein 3 (98 aa).

An N-acetylserine modification is found at Ser-2. The PDZ domain occupies 12–87; sequence VVQRVEIHKL…VVRLLVTRQS (76 aa).

In terms of assembly, interacts (via its PDZ domain) with GLS2. Interacts (via its PDZ domain) with RTKN (via the C-terminal region); this interaction facilitates Rho-mediated activation of the FOS serum response element (SRE). Interacts (via PDZ domain) with ARHGEF16. Interacts (via PDZ domain) with KCNJ4 (via C-terminus). Competes with LIN7A for KCNJ4 binding. Interacts (via its PDZ domain) with CTNNB1; this interaction inhibits the transcriptional activity of CTNNB1. Interacts with ADGRB2. In terms of tissue distribution, detected in kidney distal convoluted tubules (at protein level).

It is found in the cytoplasm. It localises to the nucleus. The protein localises to the cell membrane. In terms of biological role, may regulate a number of protein-protein interactions by competing for PDZ domain binding sites. Binds CTNNB1 and may thereby act as an inhibitor of the Wnt signaling pathway. Competes with LIN7A for KCNJ4 binding, and thereby promotes KCNJ4 internalization. May play a role in the Rho signaling pathway. The polypeptide is Tax1-binding protein 3 (Rattus norvegicus (Rat)).